Here is a 680-residue protein sequence, read N- to C-terminus: UvrABC system protein B (680 aa).

Positions Ser-27–Gly-192 constitute a Helicase ATP-binding domain. Gly-40–Thr-47 serves as a coordination point for ATP. A Beta-hairpin motif is present at residues Tyr-93–Ile-116. A Helicase C-terminal domain is found at Gln-432–Val-594. A UVR domain is found at Ala-637–His-672.

This sequence belongs to the UvrB family. In terms of assembly, forms a heterotetramer with UvrA during the search for lesions. Interacts with UvrC in an incision complex.

Its subcellular location is the cytoplasm. Its function is as follows. The UvrABC repair system catalyzes the recognition and processing of DNA lesions. A damage recognition complex composed of 2 UvrA and 2 UvrB subunits scans DNA for abnormalities. Upon binding of the UvrA(2)B(2) complex to a putative damaged site, the DNA wraps around one UvrB monomer. DNA wrap is dependent on ATP binding by UvrB and probably causes local melting of the DNA helix, facilitating insertion of UvrB beta-hairpin between the DNA strands. Then UvrB probes one DNA strand for the presence of a lesion. If a lesion is found the UvrA subunits dissociate and the UvrB-DNA preincision complex is formed. This complex is subsequently bound by UvrC and the second UvrB is released. If no lesion is found, the DNA wraps around the other UvrB subunit that will check the other stand for damage. The polypeptide is UvrABC system protein B (Nitratidesulfovibrio vulgaris (strain DSM 19637 / Miyazaki F) (Desulfovibrio vulgaris)).